Here is a 470-residue protein sequence, read N- to C-terminus: UDP-N-acetylmuramate--L-alanine ligase (470 aa).

114–120 (GTHGKTT) is an ATP binding site.

Belongs to the MurCDEF family.

The protein resides in the cytoplasm. It catalyses the reaction UDP-N-acetyl-alpha-D-muramate + L-alanine + ATP = UDP-N-acetyl-alpha-D-muramoyl-L-alanine + ADP + phosphate + H(+). Its pathway is cell wall biogenesis; peptidoglycan biosynthesis. Cell wall formation. The protein is UDP-N-acetylmuramate--L-alanine ligase of Xanthobacter autotrophicus (strain ATCC BAA-1158 / Py2).